The primary structure comprises 308 residues: Ribosomal RNA large subunit methyltransferase F (308 aa).

This sequence belongs to the methyltransferase superfamily. METTL16/RlmF family.

The protein resides in the cytoplasm. It catalyses the reaction adenosine(1618) in 23S rRNA + S-adenosyl-L-methionine = N(6)-methyladenosine(1618) in 23S rRNA + S-adenosyl-L-homocysteine + H(+). In terms of biological role, specifically methylates the adenine in position 1618 of 23S rRNA. The protein is Ribosomal RNA large subunit methyltransferase F of Shigella flexneri serotype 5b (strain 8401).